The following is a 342-amino-acid chain: Phosphate acyltransferase (342 aa).

The protein belongs to the PlsX family. In terms of assembly, homodimer. Probably interacts with PlsY.

The protein resides in the cytoplasm. It carries out the reaction a fatty acyl-[ACP] + phosphate = an acyl phosphate + holo-[ACP]. Its pathway is lipid metabolism; phospholipid metabolism. Functionally, catalyzes the reversible formation of acyl-phosphate (acyl-PO(4)) from acyl-[acyl-carrier-protein] (acyl-ACP). This enzyme utilizes acyl-ACP as fatty acyl donor, but not acyl-CoA. The protein is Phosphate acyltransferase of Trichormus variabilis (strain ATCC 29413 / PCC 7937) (Anabaena variabilis).